We begin with the raw amino-acid sequence, 466 residues long: Neuropeptide Y receptor type 5 (466 aa).

Residues 1–63 (MEVKLEEHFN…YRGSVDDLQY (63 aa)) lie on the Extracellular side of the membrane. N-linked (GlcNAc...) asparagine glycans are attached at residues N10, N17, N38, and N39. Residues 64 to 84 (FLIGLYTFVSLLGFMGNLLIL) traverse the membrane as a helical segment. Residues 85 to 98 (MAVMKKRNQKTTVN) lie on the Cytoplasmic side of the membrane. The chain crosses the membrane as a helical span at residues 99–119 (FLIGNLAFSDILVVLFCSPFT). The Extracellular segment spans residues 120–138 (LTSVLLDQWMFGKAMCHIM). A disulfide bridge links C135 with C219. The helical transmembrane segment at 139 to 159 (PFLQCVSVLVSTLILISIAIV) threads the bilayer. The Cytoplasmic portion of the chain corresponds to 160-177 (RYHMIKHPISNNLTANHG). A helical transmembrane segment spans residues 178–198 (YFLIATVWTLGFAICSPLPVF). Residues 199-229 (HSLVELKETFGSALLSSKYLCVESWPSDSYR) lie on the Extracellular side of the membrane. A helical membrane pass occupies residues 230-250 (IAFTISLLLVQYILPLVCLTV). Over 251-389 (SHTSVCRSIS…KKRSRSVFYR (139 aa)) the chain is Cytoplasmic. The interval 323–346 (GPSQEKHLTVPENPGSVRSQLSPS) is disordered. Residues 390 to 410 (LTILILVFAVSWMPLHVFHVV) form a helical membrane-spanning segment. At 411 to 427 (TDFNDNLISNRHFKLVY) the chain is on the extracellular side. Residues 428–448 (CICHLLGMMSCCLNPILYGFL) form a helical membrane-spanning segment. The Cytoplasmic segment spans residues 449 to 466 (NNGIKADLRALIHCLHMS). The S-palmitoyl cysteine moiety is linked to residue C462.

The protein belongs to the G-protein coupled receptor 1 family.

It is found in the cell membrane. Its function is as follows. Receptor for neuropeptide Y and peptide YY. The activity of this receptor is mediated by G proteins that inhibit adenylate cyclase activity. Seems to be associated with food intake. Could be involved in feeding disorders. The chain is Neuropeptide Y receptor type 5 (Npy5r) from Mus musculus (Mouse).